A 470-amino-acid polypeptide reads, in one-letter code: Argininosuccinate lyase (470 aa).

It belongs to the lyase 1 family. Argininosuccinate lyase subfamily.

The protein resides in the cytoplasm. It carries out the reaction 2-(N(omega)-L-arginino)succinate = fumarate + L-arginine. Its pathway is amino-acid biosynthesis; L-arginine biosynthesis; L-arginine from L-ornithine and carbamoyl phosphate: step 3/3. This chain is Argininosuccinate lyase, found in Leptospira borgpetersenii serovar Hardjo-bovis (strain L550).